We begin with the raw amino-acid sequence, 154 residues long: Protein X (154 aa).

A mitochondrial targeting sequence region spans residues 68-117 (PCALRFTSARRMETTVNAHQFLPKVLHKRTLGLSAMSTTDLEAYFKDCLF).

It belongs to the orthohepadnavirus protein X family. As to quaternary structure, may form homodimer. May interact with host CEBPA, CFLAR, CREB1, DDB1, E4F1, HBXIP, HSPD1/HSP60, NFKBIA, POLR2E and SMAD4. Interacts with host SMC5-SMC6 complex and induces its degradation. Interacts with host TRPC4AP; leading to prevent ubiquitination of TRPC4AP. Interacts with host PLSCR1; this interaction promotes ubiquitination and degradation of HBx and impairs HBx-mediated cell proliferation. In terms of processing, a fraction may be phosphorylated in insect cells and HepG2 cells, a human hepatoblastoma cell line. Phosphorylated in vitro by host protein kinase C or mitogen-activated protein kinase. N-acetylated in insect cells.

It localises to the host cytoplasm. The protein resides in the host nucleus. The protein localises to the host mitochondrion. In terms of biological role, multifunctional protein that plays a role in silencing host antiviral defenses and promoting viral transcription. Does not seem to be essential for HBV infection. May be directly involved in development of cirrhosis and liver cancer (hepatocellular carcinoma). Most of cytosolic activities involve modulation of cytosolic calcium. The effect on apoptosis is controversial depending on the cell types in which the studies have been conducted. May induce apoptosis by localizing in mitochondria and causing loss of mitochondrial membrane potential. May also modulate apoptosis by binding host CFLAR, a key regulator of the death-inducing signaling complex (DISC). Promotes viral transcription by using the host E3 ubiquitin ligase DDB1 to target the SMC5-SMC6 complex to proteasomal degradation. This host complex would otherwise bind to viral episomal DNA, and prevents its transcription. Moderately stimulates transcription of many different viral and cellular transcription elements. Promoters and enhancers stimulated by HBx contain DNA binding sites for NF-kappa-B, AP-1, AP-2, c-EBP, ATF/CREB, or the calcium-activated factor NF-AT. This Homo sapiens (Human) protein is Protein X.